The sequence spans 131 residues: Ribosome-binding factor A (131 aa).

This sequence belongs to the RbfA family. As to quaternary structure, monomer. Binds 30S ribosomal subunits, but not 50S ribosomal subunits or 70S ribosomes.

The protein resides in the cytoplasm. In terms of biological role, one of several proteins that assist in the late maturation steps of the functional core of the 30S ribosomal subunit. Associates with free 30S ribosomal subunits (but not with 30S subunits that are part of 70S ribosomes or polysomes). Required for efficient processing of 16S rRNA. May interact with the 5'-terminal helix region of 16S rRNA. The sequence is that of Ribosome-binding factor A from Thermotoga sp. (strain RQ2).